Reading from the N-terminus, the 246-residue chain is Ubiquinone biosynthesis O-methyltransferase (246 aa).

S-adenosyl-L-methionine is bound by residues R40, G70, D91, and M135.

It belongs to the methyltransferase superfamily. UbiG/COQ3 family.

The catalysed reaction is a 3-demethylubiquinol + S-adenosyl-L-methionine = a ubiquinol + S-adenosyl-L-homocysteine + H(+). The enzyme catalyses a 3-(all-trans-polyprenyl)benzene-1,2-diol + S-adenosyl-L-methionine = a 2-methoxy-6-(all-trans-polyprenyl)phenol + S-adenosyl-L-homocysteine + H(+). Its pathway is cofactor biosynthesis; ubiquinone biosynthesis. Its function is as follows. O-methyltransferase that catalyzes the 2 O-methylation steps in the ubiquinone biosynthetic pathway. This is Ubiquinone biosynthesis O-methyltransferase from Colwellia psychrerythraea (strain 34H / ATCC BAA-681) (Vibrio psychroerythus).